A 130-amino-acid polypeptide reads, in one-letter code: Small ribosomal subunit protein uS11 (130 aa).

This sequence belongs to the universal ribosomal protein uS11 family. Part of the 30S ribosomal subunit. Interacts with proteins S7 and S18. Binds to IF-3.

In terms of biological role, located on the platform of the 30S subunit, it bridges several disparate RNA helices of the 16S rRNA. Forms part of the Shine-Dalgarno cleft in the 70S ribosome. This Shewanella sediminis (strain HAW-EB3) protein is Small ribosomal subunit protein uS11.